Reading from the N-terminus, the 280-residue chain is Eukaryotic translation initiation factor 3 subunit F-1 (280 aa).

The MPN domain maps to 8–138 (VRVHPVVLFQ…LRSYVCIQLG (131 aa)).

This sequence belongs to the eIF-3 subunit F family. As to quaternary structure, component of the eukaryotic translation initiation factor 3 (eIF-3) complex. The eIF-3 complex interacts with pix.

Its subcellular location is the cytoplasm. Functionally, component of the eukaryotic translation initiation factor 3 (eIF-3) complex, which is involved in protein synthesis of a specialized repertoire of mRNAs and, together with other initiation factors, stimulates binding of mRNA and methionyl-tRNAi to the 40S ribosome. The eIF-3 complex specifically targets and initiates translation of a subset of mRNAs involved in cell proliferation. The chain is Eukaryotic translation initiation factor 3 subunit F-1 from Drosophila persimilis (Fruit fly).